An 874-amino-acid chain; its full sequence is MKSAEIREAFLGFFEEQGHTRVASSSLIPGNDPTLLFTNAGMNQFKDCFLGQEKRAYTRAVTSQKCVRAGGKHNDLENVGYTARHHTFFEMLGNFSFGDYFKRDAITYAWTFLTSEKWLNLPKEKLWVTVYATDDEAYDIWTKEIGVPAERMVRIGDNKGAPYASDNFWTMGDTGPCGPCSEIFFDHGPEIWGGPPGSPEEDGDRYIEIWNNVFMQFNRTADGVLHPLPAPSVDTGMGLERVSAVLQHVHSNYEIDLFQSLLAASAKAIGCSNDNQASLKVVADHIRSCGFLIADGVLPSNEGRGYVLRRIIRRACRHGNKLGAKGSFFYQIVAALVAEMGSAFPELVQQQSHIERVLKGEEEQFAKTLEQGLKILEQDLADLKGTVVPGEVVFKLYDTYGFPMDLTGDIARERNLTLDEAGFEREMDAQRVRARSASSFGMDYNSLVKVDVATQFTGYSATTGSASVVALYKEGQSVTHLNEGEEGVVILDTTPFYAESGGQIGDSGFLHAGDVRFDVSDTTKTGGAFLHHGVVASGSLSVGAQVETQVADEVRDATKLNHSATHLLHAALRQVLGEHVQQKGSLVDSQRLRFDFSHFEAIKPEQLRALEDIVNAEIRKNTEVMTEETDIDTAKKKGAMALFGEKYGDSVRVLSMGGEFSVELCGGIHASRTGDIALFKIVSEGGVAAGVRRIEAVTGAAALAWLNAAEDQLKEAATLVKGNRDNLLDKLTAVLERNRLLEKQLEQLQAKAASAAGDDLSAAALDVKGVKVLATRLDGQDGKALLALVDQLKNKLGRAVILLGSVHEDKVVLVAGVTKDLTGQLKAGDLMKQAAAAVGGKGGGRPDMAQGGGVDAGALDSALALAVPFVEQGI.

Residues histidine 562, histidine 566, cysteine 665, and histidine 669 each contribute to the Zn(2+) site.

The protein belongs to the class-II aminoacyl-tRNA synthetase family. Zn(2+) is required as a cofactor.

It localises to the cytoplasm. It catalyses the reaction tRNA(Ala) + L-alanine + ATP = L-alanyl-tRNA(Ala) + AMP + diphosphate. Functionally, catalyzes the attachment of alanine to tRNA(Ala) in a two-step reaction: alanine is first activated by ATP to form Ala-AMP and then transferred to the acceptor end of tRNA(Ala). Also edits incorrectly charged Ser-tRNA(Ala) and Gly-tRNA(Ala) via its editing domain. The sequence is that of Alanine--tRNA ligase from Pseudomonas savastanoi pv. phaseolicola (strain 1448A / Race 6) (Pseudomonas syringae pv. phaseolicola (strain 1448A / Race 6)).